Reading from the N-terminus, the 1493-residue chain is ABC transporter C family member 7 (1493 aa).

10 helical membrane passes run 21-41, 70-90, 102-122, 140-160, 165-185, 309-329, 343-360, 423-443, 448-468, and 535-555; these read FPMFSIFFNLLLLLVMFGSCV, VVICCETLSALNSVLLLLSCF, LMILLDLLFTALSWGAISFYI, VWWVLYFMFSCYRLLVDIALY, LVSVHLLLSDVLAVSVGLFLC, ILLSTLFAFVYTVSCYVAPYL, YSNQGVVLVTTFFVAKLV, WYMHDPWILVLQISLALLILY, LGSIAAFAATFLVMLGNIPLA, and SVLWAAPSFVSATAFGACMLL. Residues 309-590 enclose the ABC transmembrane type-1 1 domain; it reads ILLSTLFAFV…LPDTISMIVQ (282 aa). The 224-residue stretch at 624-847 folds into the ABC transporter 1 domain; sequence VEVSNGAFSW…GTDFMELVGA (224 aa). 659-666 contributes to the ATP binding site; that stretch reads GTVGSGKS. Positions 863 to 898 are disordered; it reads ASAQSTTSKESKVSNDEEKQEEDLPSPKGQLVQEEE. At Ser888 the chain carries Phosphoserine. 6 helical membrane-spanning segments follow: residues 915-935, 959-979, 1038-1055, 1059-1081, 1153-1173, and 1177-1197; these read LAYGGALVPIILVVQILFQVL, GSTLILVYVFLATASSFCILV, FSNLAIAAVNILGIIGVM, AWQVLIVFIPVIAACTWYRQYYI, LSTVAFALSLVILVSVPEGVI, and FAGLAVTYALNLNSLQATLIW. In terms of domain architecture, ABC transmembrane type-1 2 spans 922–1204; it reads VPIILVVQIL…LIWTLCDLEN (283 aa). The ABC transporter 2 domain maps to 1241 to 1475; it reads ITICNLQVRY…KSSSFSKLVA (235 aa). 1275–1282 is a binding site for ATP; it reads GRTGCGKS.

This sequence belongs to the ABC transporter superfamily. ABCC family. Conjugate transporter (TC 3.A.1.208) subfamily. In terms of tissue distribution, ubiquitous.

It localises to the membrane. The enzyme catalyses ATP + H2O + xenobioticSide 1 = ADP + phosphate + xenobioticSide 2.. In terms of biological role, pump for glutathione S-conjugates. This Arabidopsis thaliana (Mouse-ear cress) protein is ABC transporter C family member 7 (ABCC7).